A 56-amino-acid chain; its full sequence is Large ribosomal subunit protein bL32c (56 aa).

This sequence belongs to the bacterial ribosomal protein bL32 family.

It localises to the plastid. Its subcellular location is the chloroplast. The chain is Large ribosomal subunit protein bL32c from Tupiella akineta (Green alga).